Here is a 752-residue protein sequence, read N- to C-terminus: MMLSLGSDATVLPFHAKNLKFTPKLSTLNGDLAFSKGLGVGRLNCGSVRLNHKQHVRAVGKSFGADENGDGSEDDVVNATIEKSKKVLALQRELIQQIAERKKLVSSIDSDSIPGLEGNGVSYESSEKSLSRDSNPQKGSSSSGSAVETKRWHCFQQLCRSKETETWAVSSVGINQGFDEIEKKNDAVKASSKLHFNEQIKNKLYERPDTKDISSSIRTSSLKFENFEGANEPSSKEVANEAENFESGGEKPPPLAGTNVMNIILVSAECAPWSKTGGLGDVAGSLPKALARRGHRVMIVAPHYGNYAEAHDIGVRKRYKVAGQDMEVTYFHTYIDGVDIVFIDSPIFRNLESNIYGGNRLDILRRMVLFCKAAVEVPWHVPCGGICYGDGNLVFIANDWHTALLPVYLKAYYRDHGLMNYTRSVLVIHNIAHQGRGPVEDFNTVDLSGNYLDLFKMYDPVGGEHFNIFAAGLKTADRIVTVSHGYAWELKTSEGGWGLHNIINESDWKFRGIVNGVDTKDWNPQFDAYLTSDGYTNYNLKTLQTGKRQCKAALQRELGLPVREDVPIISFIGRLDHQKGVDLIAEAIPWMMSHDVQLVMLGTGRADLEQMLKEFEAQHCDKIRSWVGFSVKMAHRITAGSDILLMPSRFEPCGLNQLYAMSYGTVPVVHGVGGLRDTVQPFNPFDESGVGWTFDRAEANKLMAALWNCLLTYKDYKKSWEGIQERGMSQDLSWDNAAQQYEEVLVAAKYQW.

A chloroplast-targeting transit peptide spans 1–57 (MMLSLGSDATVLPFHAKNLKFTPKLSTLNGDLAFSKGLGVGRLNCGSVRLNHKQHVR). 2 disordered regions span residues 116 to 146 (LEGN…SGSA) and 224 to 253 (FENF…EKPP). Lys-275 is an ADP-alpha-D-glucose binding site.

Belongs to the glycosyltransferase 1 family. Bacterial/plant glycogen synthase subfamily. In terms of tissue distribution, widely expressed.

The protein localises to the plastid. The protein resides in the chloroplast. It is found in the amyloplast. The catalysed reaction is [(1-&gt;4)-alpha-D-glucosyl](n) + ADP-alpha-D-glucose = [(1-&gt;4)-alpha-D-glucosyl](n+1) + ADP + H(+). It participates in glycan biosynthesis; starch biosynthesis. The chain is Granule-bound starch synthase 2, chloroplastic/amyloplastic from Pisum sativum (Garden pea).